A 429-amino-acid polypeptide reads, in one-letter code: Ribosomal RNA small subunit methyltransferase B (429 aa).

Residues 254–260 (CAAPGGK), Asp277, Asp303, and Asp322 each bind S-adenosyl-L-methionine. The active-site Nucleophile is Cys375.

This sequence belongs to the class I-like SAM-binding methyltransferase superfamily. RsmB/NOP family.

The protein resides in the cytoplasm. It catalyses the reaction cytidine(967) in 16S rRNA + S-adenosyl-L-methionine = 5-methylcytidine(967) in 16S rRNA + S-adenosyl-L-homocysteine + H(+). In terms of biological role, specifically methylates the cytosine at position 967 (m5C967) of 16S rRNA. The protein is Ribosomal RNA small subunit methyltransferase B of Yersinia pestis bv. Antiqua (strain Angola).